The sequence spans 139 residues: D-ribose pyranase (139 aa).

The Proton donor role is filled by H20. Residues D28, H106, and 128 to 130 (FAN) each bind substrate.

This sequence belongs to the RbsD / FucU family. RbsD subfamily. As to quaternary structure, homodecamer.

Its subcellular location is the cytoplasm. It catalyses the reaction beta-D-ribopyranose = beta-D-ribofuranose. Its pathway is carbohydrate metabolism; D-ribose degradation; D-ribose 5-phosphate from beta-D-ribopyranose: step 1/2. Functionally, catalyzes the interconversion of beta-pyran and beta-furan forms of D-ribose. In Yersinia enterocolitica serotype O:8 / biotype 1B (strain NCTC 13174 / 8081), this protein is D-ribose pyranase.